Consider the following 139-residue polypeptide: Classical arabinogalactan protein 3 (139 aa).

Residues 1 to 21 (MALKTLQALIFLGLFAASCLA) form the signal peptide. Pyrrolidone carboxylic acid is present on Q22. The interval 30 to 115 (TFLPPVESPS…PAPRADGPVA (86 aa)) is disordered. Pro residues-rich tracts occupy residues 46–77 (AEPP…PPTT) and 97–107 (PSGPTPAPAPA). D116 carries GPI-anchor amidated aspartate lipidation. The propeptide at 117-139 (SALTNKAFLVSTVIAGALYAVLA) is removed in mature form.

Belongs to the classical AGP family. In terms of processing, O-glycosylated on the hydroxyproline residues. Expressed at a low level in roots.

The protein localises to the cell membrane. Functionally, proteoglycan that seems to be implicated in diverse developmental roles such as differentiation, cell-cell recognition, embryogenesis and programmed cell death. The sequence is that of Classical arabinogalactan protein 3 (AGP3) from Arabidopsis thaliana (Mouse-ear cress).